The following is a 486-amino-acid chain: BTB/POZ domain and ankyrin repeat-containing protein NBCL (486 aa).

A BTB domain is found at 25–115 (SDVTFSVEGR…LYSGQVSIVP (91 aa)). The C2HC NPR-type zinc finger occupies 121–135 (RPNCGERGCWHTHCS). Residues Cys124, Cys129, His131, and Cys134 each coordinate Zn(2+). ANK repeat units lie at residues 257-286 (QKIR…LNLD), 287-316 (EALA…DVNY), 321-350 (AGKT…DPNV), and 354-388 (DNVT…KLRL). Disordered regions lie at residues 403-441 (EEGN…NNHN) and 464-486 (QMSD…HHDY). Composition is skewed to low complexity over residues 406-418 (NANN…TTTT) and 432-441 (SSSSSGNNHN). Over residues 466 to 475 (SDDHGGRHGD) the composition is skewed to basic and acidic residues.

Belongs to the plant 'ANKYRIN-BTB/POZ' family. 'NOOT-BOP-COCH-like' (NBCL) subfamily. In terms of assembly, homodimer.

It is found in the nucleus. The protein resides in the cytoplasm. Its subcellular location is the cell membrane. It functions in the pathway protein modification; protein ubiquitination. In terms of biological role, may act as a substrate-specific adapter of an E3 ubiquitin-protein ligase complex (CUL3-RBX1-BTB) which mediates the ubiquitination and subsequent proteasomal degradation of target proteins. Transcriptional co-regulator involved in the promotion of leaf and floral meristem fate and determinacy. Necessary for the development of stipules at the base of petioles. Required for the abscission of senescent organs, probably by regulating the cell wall disorganization in abscission zones (AZs, e.g. pulvini at the base of leaves). Promotes slightly root-cap border cells separation from the root tip. Involved in the coordination of the symbiotic nodule developmental program; promotes the formation of root nodules by interacting directly with APP1 to modulate the expression of the nuclear transcription factor Y subunit (NF-YA1), a key nodulin. Necessary for the robust maintenance of nodule identity throughout the nodule developmental program. This chain is BTB/POZ domain and ankyrin repeat-containing protein NBCL, found in Lupinus angustifolius (Narrow-leaved blue lupine).